The primary structure comprises 228 residues: Ribonuclease HII (228 aa).

One can recognise an RNase H type-2 domain in the interval 26-214 (RAVAGVDEVG…VRAHSRFPLD (189 aa)). Residues D32, E33, and D124 each coordinate a divalent metal cation.

This sequence belongs to the RNase HII family. Mn(2+) serves as cofactor. Requires Mg(2+) as cofactor.

Its subcellular location is the cytoplasm. The enzyme catalyses Endonucleolytic cleavage to 5'-phosphomonoester.. Its function is as follows. Endonuclease that specifically degrades the RNA of RNA-DNA hybrids. This Solibacter usitatus (strain Ellin6076) protein is Ribonuclease HII.